Consider the following 487-residue polypeptide: Betaine aldehyde dehydrogenase (487 aa).

K(+) is bound by residues isoleucine 27 and aspartate 93. NAD(+) is bound at residue 149–151; that stretch reads GAW. Lysine 161 (charge relay system) is an active-site residue. Residues 175–178 and 228–231 contribute to the NAD(+) site; these read KPSE and SVPT. Leucine 243 is a K(+) binding site. The active-site Proton acceptor is the glutamate 249. NAD(+) is bound by residues glycine 251, cysteine 283, and glutamate 384. Catalysis depends on cysteine 283, which acts as the Nucleophile. Cysteine 283 carries the cysteine sulfenic acid (-SOH) modification. 2 residues coordinate K(+): lysine 454 and glycine 457. Glutamate 461 serves as the catalytic Charge relay system.

This sequence belongs to the aldehyde dehydrogenase family. As to quaternary structure, dimer of dimers. K(+) serves as cofactor.

The enzyme catalyses betaine aldehyde + NAD(+) + H2O = glycine betaine + NADH + 2 H(+). It functions in the pathway amine and polyamine biosynthesis; betaine biosynthesis via choline pathway; betaine from betaine aldehyde: step 1/1. Involved in the biosynthesis of the osmoprotectant glycine betaine. Catalyzes the irreversible oxidation of betaine aldehyde to the corresponding acid. This Brucella melitensis biotype 2 (strain ATCC 23457) protein is Betaine aldehyde dehydrogenase.